The chain runs to 748 residues: Adenosylcobalamin-dependent ribonucleoside-triphosphate reductase (748 aa).

An intrachain disulfide couples cysteine 123 to cysteine 426. The segment at 151–162 (SMPYSFMFDELM) is effector region-1. The effector region-2 stretch occupies residues 172–320 (TKDNIAKLPP…IGNLIGKTVV (149 aa)). Active-site residues include cysteine 415 and glutamate 417. The adenosylcobalamin-binding-1 stretch occupies residues 572-633 (FHYAGYLIQR…DPAFASAGTV (62 aa)). The tract at residues 692–733 (FKQAPKEPIDVKTYKQKCAAIHGSVAAVFAVQNADHDQKDLE) is adenosylcobalamin-binding-2.

It belongs to the class II ribonucleoside-triphosphate reductase family. As to quaternary structure, monomer. Adenosylcob(III)alamin is required as a cofactor.

The catalysed reaction is a 2'-deoxyribonucleoside 5'-triphosphate + [thioredoxin]-disulfide + H2O = a ribonucleoside 5'-triphosphate + [thioredoxin]-dithiol. Its activity is regulated as follows. Allosterically regulated by ATP and dNTP. This is Adenosylcobalamin-dependent ribonucleoside-triphosphate reductase (rtpR) from Lacticaseibacillus paracasei (strain ATCC 334 / BCRC 17002 / CCUG 31169 / CIP 107868 / KCTC 3260 / NRRL B-441) (Lactobacillus paracasei).